A 276-amino-acid polypeptide reads, in one-letter code: NH(3)-dependent NAD(+) synthetase (276 aa).

43–50 is a binding site for ATP; it reads GISGGVDS. Asp49 serves as a coordination point for Mg(2+). Arg146 provides a ligand contact to deamido-NAD(+). Residue Thr166 coordinates ATP. A Mg(2+)-binding site is contributed by Glu171. Positions 179 and 186 each coordinate deamido-NAD(+). The ATP site is built by Lys195 and Thr217. 266 to 267 serves as a coordination point for deamido-NAD(+); sequence HK.

The protein belongs to the NAD synthetase family. In terms of assembly, homodimer.

It catalyses the reaction deamido-NAD(+) + NH4(+) + ATP = AMP + diphosphate + NAD(+) + H(+). It participates in cofactor biosynthesis; NAD(+) biosynthesis; NAD(+) from deamido-NAD(+) (ammonia route): step 1/1. In terms of biological role, catalyzes the ATP-dependent amidation of deamido-NAD to form NAD. Uses ammonia as a nitrogen source. This is NH(3)-dependent NAD(+) synthetase from Aliivibrio fischeri (strain MJ11) (Vibrio fischeri).